Consider the following 610-residue polypeptide: Menin (610 aa).

The interaction with FANCD2 stretch occupies residues 214-390; sequence GVAERSWLYL…SLLEAGEERP (177 aa). A disordered region spans residues 462–552; the sequence is AEAAEAEELW…SPPPEGPVLT (91 aa). A compositionally biased stretch (basic and acidic residues) spans 484–500; it reads RRESKPEEPPPPKKPAL. 2 positions are modified to phosphoserine: Ser487 and Ser543. Positions 537–548 are enriched in pro residues; that stretch reads APAPAASPPPEG. Residue Thr594 is modified to Phosphothreonine.

Component of the MLL-HCF complex, at least composed of KMT2A/MLL1, MEN1, ASH2L, RBBP5, DPY30, WDR5, HCFC1 and HCFC2. Component of the menin-associated histone methyltransferase complex, at least composed of KMT2B/MLL4, MEN1, ASH2L, RBBP5, DPY30 and WDR5. Interacts with POLR2B. Interacts with POLR2A phosphorylated at 'Ser-5', but not with the unphosphorylated, nor 'Ser-2' phosphorylated POLR2A forms. Interacts with FANCD2 and DBF4. Interacts with SMAD3, but not with SMAD2, nor SMAD4. Directly interacts with NFKB1, NFKB2 and RELA. Interacts with JUND (via MBM motif); inhibits the interaction of JUND with MAPK10 and the phosphorylation of JUND by MAP kinases MAPK8 and MAPK10. Interacts with KMT2A (via MBM motif). The KMT2A-MEN1 complex interacts with PSIP1 with a greater affinity as MEN1 enhances interaction of KMT2A with PSIP1.

The protein localises to the nucleus. Functionally, essential component of a MLL/SET1 histone methyltransferase (HMT) complex, a complex that specifically methylates 'Lys-4' of histone H3 (H3K4). Functions as a transcriptional regulator. Binds to the TERT promoter and represses telomerase expression. Plays a role in TGFB1-mediated inhibition of cell-proliferation, possibly regulating SMAD3 transcriptional activity. Represses JUND-mediated transcriptional activation on AP1 sites, as well as that mediated by NFKB subunit RELA. Positively regulates HOXC8 and HOXC6 gene expression. May be involved in normal hematopoiesis through the activation of HOXA9 expression. May be involved in DNA repair. This is Menin (MEN1) from Canis lupus familiaris (Dog).